The primary structure comprises 415 residues: NEDD8-specific protease 2 (415 aa).

A disordered region spans residues 1 to 42; sequence MRSNSIFTKEIDSEAVKKSSNLRPPSTGSSNSNGSDTASPKK. Over residues 26–38 the composition is skewed to low complexity; the sequence is STGSSNSNGSDTA. At Ser35 the chain carries Phosphoserine. Active-site residues include His171, Asp188, and Cys229. Residues 320-415 form a disordered region; sequence AVTSDSAQPH…QHTQQSIEIH (96 aa). 3 stretches are compositionally biased toward polar residues: residues 335–368, 379–390, and 405–415; these read MPSS…NSSP, TASTSVLPTSIL, and IQHTQQSIEIH. Ser367 bears the Phosphoserine mark.

It belongs to the peptidase C48 family.

The protein localises to the cytoplasm. It localises to the nucleus. In terms of biological role, protease that catalyzes two essential functions in the NEDD8 pathway: processing of full-length NEDD8 to its mature form and deconjugation of NEDD8 from targeted proteins such as the pcu1, pcu2 and pcu4 cullins and other proteins. Has a role in meiosis. This is NEDD8-specific protease 2 (nep2) from Schizosaccharomyces pombe (strain 972 / ATCC 24843) (Fission yeast).